The following is a 101-amino-acid chain: Phosphoribosyl-AMP cyclohydrolase (101 aa).

Asp71 contributes to the Mg(2+) binding site. Cys72 contacts Zn(2+). Positions 73 and 75 each coordinate Mg(2+). Zn(2+)-binding residues include Cys88 and Cys95.

The protein belongs to the PRA-CH family. As to quaternary structure, homodimer. Mg(2+) is required as a cofactor. The cofactor is Zn(2+).

The protein resides in the cytoplasm. It catalyses the reaction 1-(5-phospho-beta-D-ribosyl)-5'-AMP + H2O = 1-(5-phospho-beta-D-ribosyl)-5-[(5-phospho-beta-D-ribosylamino)methylideneamino]imidazole-4-carboxamide. It participates in amino-acid biosynthesis; L-histidine biosynthesis; L-histidine from 5-phospho-alpha-D-ribose 1-diphosphate: step 3/9. Catalyzes the hydrolysis of the adenine ring of phosphoribosyl-AMP. In Bacillus cereus (strain AH187), this protein is Phosphoribosyl-AMP cyclohydrolase.